Reading from the N-terminus, the 310-residue chain is Syntaxin-81 (310 aa).

Residues Met-1 to Arg-289 lie on the Cytoplasmic side of the membrane. Residues Arg-77 to Asn-114 are a coiled coil. The chain crosses the membrane as a helical; Anchor for type IV membrane protein span at residues Thr-290–Ser-310.

Belongs to the syntaxin family. As to quaternary structure, part of the t-SNARE complex. Interacts with MAG2.

The protein resides in the membrane. Functionally, vesicle trafficking protein that functions in the secretory pathway. This is Syntaxin-81 (SYP81) from Arabidopsis thaliana (Mouse-ear cress).